Reading from the N-terminus, the 139-residue chain is Large ribosomal subunit protein uL16 (139 aa).

The protein belongs to the universal ribosomal protein uL16 family. As to quaternary structure, part of the 50S ribosomal subunit.

Its function is as follows. Binds 23S rRNA and is also seen to make contacts with the A and possibly P site tRNAs. In Chlorobium chlorochromatii (strain CaD3), this protein is Large ribosomal subunit protein uL16.